Here is a 1070-residue protein sequence, read N- to C-terminus: DNA-directed RNA polymerase subunit beta (1070 aa).

This sequence belongs to the RNA polymerase beta chain family. In terms of assembly, in plastids the minimal PEP RNA polymerase catalytic core is composed of four subunits: alpha, beta, beta', and beta''. When a (nuclear-encoded) sigma factor is associated with the core the holoenzyme is formed, which can initiate transcription.

It localises to the plastid. It is found in the chloroplast. The enzyme catalyses RNA(n) + a ribonucleoside 5'-triphosphate = RNA(n+1) + diphosphate. Functionally, DNA-dependent RNA polymerase catalyzes the transcription of DNA into RNA using the four ribonucleoside triphosphates as substrates. This Cucumis sativus (Cucumber) protein is DNA-directed RNA polymerase subunit beta.